Reading from the N-terminus, the 949-residue chain is Zinc finger CCHC domain-containing protein 14 (949 aa).

6 disordered regions span residues 25–44 (SSLN…PGGA), 59–92 (EAPV…LGKH), 200–221 (STSS…LSKV), 236–262 (AGIP…LPHC), 355–457 (KEKS…DKEK), and 739–779 (PESS…PQPA). A compositionally biased stretch (gly residues) spans 28–43 (NGGGGHGGKGAPGPGG). The segment covering 61 to 78 (PVSSVSNSLENALHTSAH) has biased composition (polar residues). Over residues 200–219 (STSSPPQQLQSPSPGNPSLS) the composition is skewed to low complexity. A compositionally biased stretch (basic and acidic residues) spans 395-411 (HAAELRVEVEQPHHQLP). Low complexity predominate over residues 416-425 (SSEYSSSSSS). A compositionally biased stretch (basic and acidic residues) spans 431 to 457 (AREESSDSAEENDRRVEIHLESSDKEK). The segment at 906–923 (LSCYNCGATGHRAQDCKQ) adopts a CCHC-type zinc-finger fold.

The polypeptide is Zinc finger CCHC domain-containing protein 14 (ZCCHC14) (Homo sapiens (Human)).